The following is a 199-amino-acid chain: 5'-deoxynucleotidase HDDC2 (199 aa).

N-acetylalanine is present on Ala-2. The residue at position 5 (Ser-5) is a Phosphoserine. The HD domain maps to 41–143; sequence VSDHMYRMAV…VKQLDQCEMI (103 aa). A divalent metal cation-binding residues include His-44, His-72, Asp-73, Glu-76, Asp-81, Ile-82, and Asp-138. Ser-199 carries the post-translational modification Phosphoserine.

The protein belongs to the HDDC2 family. In terms of assembly, homodimer. Requires Mn(2+) as cofactor. Co(2+) serves as cofactor. It depends on Mg(2+) as a cofactor.

The enzyme catalyses a 2'-deoxyribonucleoside 5'-phosphate + H2O = a 2'-deoxyribonucleoside + phosphate. Its function is as follows. Catalyzes the dephosphorylation of the nucleoside 5'-monophosphates deoxyadenosine monophosphate (dAMP), deoxycytidine monophosphate (dCMP), deoxyguanosine monophosphate (dGMP) and deoxythymidine monophosphate (dTMP). This chain is 5'-deoxynucleotidase HDDC2 (Hddc2), found in Mus musculus (Mouse).